The sequence spans 336 residues: Glyceraldehyde-3-phosphate dehydrogenase (336 aa).

NAD(+)-binding positions include arginine 12–isoleucine 13, aspartate 34, and methionine 79. Residues serine 150 to threonine 152, threonine 181, threonine 210 to glycine 211, and arginine 233 each bind D-glyceraldehyde 3-phosphate. Catalysis depends on cysteine 151, which acts as the Nucleophile. Asparagine 316 is a binding site for NAD(+).

Belongs to the glyceraldehyde-3-phosphate dehydrogenase family. Homotetramer.

The protein resides in the cytoplasm. It catalyses the reaction D-glyceraldehyde 3-phosphate + phosphate + NAD(+) = (2R)-3-phospho-glyceroyl phosphate + NADH + H(+). The protein operates within carbohydrate degradation; glycolysis; pyruvate from D-glyceraldehyde 3-phosphate: step 1/5. This Echinococcus multilocularis (Fox tapeworm) protein is Glyceraldehyde-3-phosphate dehydrogenase.